A 339-amino-acid chain; its full sequence is Methionine synthase (339 aa).

Residues His212, Cys214, and Cys295 each coordinate Zn(2+).

This sequence belongs to the archaeal MetE family. It depends on Zn(2+) as a cofactor.

It participates in amino-acid biosynthesis; L-methionine biosynthesis via de novo pathway. Catalyzes the transfer of a methyl group to L-homocysteine resulting in methionine formation. The physiological methyl donor is unknown. This chain is Methionine synthase, found in Sulfolobus acidocaldarius (strain ATCC 33909 / DSM 639 / JCM 8929 / NBRC 15157 / NCIMB 11770).